Consider the following 505-residue polypeptide: Trans-cinnamate 4-monooxygenase (505 aa).

Residues L3 to I23 form a helical membrane-spanning segment. Residues R213–Q218 and A306 contribute to the (E)-cinnamate site. C447 contacts heme.

The protein belongs to the cytochrome P450 family. Heme is required as a cofactor. As to expression, expressed in roots, leaves, stems, flowers and siliques.

It is found in the membrane. It carries out the reaction (E)-cinnamate + reduced [NADPH--hemoprotein reductase] + O2 = (E)-4-coumarate + oxidized [NADPH--hemoprotein reductase] + H2O + H(+). It functions in the pathway phenylpropanoid metabolism; trans-4-coumarate biosynthesis; trans-4-coumarate from trans-cinnamate: step 1/1. In terms of biological role, catalyzes the first oxidative step of the phenylpropanoid pathway in higher plants by transforming trans-cinnamate into p-coumarate. The compounds formed by this pathway are essential components for lignification, pollination, and defense against ultraviolet light, predators and pathogens. The sequence is that of Trans-cinnamate 4-monooxygenase from Arabidopsis thaliana (Mouse-ear cress).